Consider the following 181-residue polypeptide: Adenine phosphoribosyltransferase (181 aa).

This sequence belongs to the purine/pyrimidine phosphoribosyltransferase family. Homodimer.

It localises to the cytoplasm. It catalyses the reaction AMP + diphosphate = 5-phospho-alpha-D-ribose 1-diphosphate + adenine. It functions in the pathway purine metabolism; AMP biosynthesis via salvage pathway; AMP from adenine: step 1/1. In terms of biological role, catalyzes a salvage reaction resulting in the formation of AMP, that is energically less costly than de novo synthesis. The polypeptide is Adenine phosphoribosyltransferase (Rhizobium leguminosarum bv. trifolii (strain WSM2304)).